The following is a 429-amino-acid chain: Lysophosphatidic acid phosphatase type 6 (429 aa).

The N-terminal 32 residues, 1–32 (MISRVFKLRMWAPVGVLTSLTYCLHQRRVALA), are a transit peptide targeting the mitochondrion. The substrate binding stretch occupies residues 58–169 (RHGARSPLKP…VFIRSTNIYR (112 aa)). The active-site Nucleophile is His-59. Asp-336 serves as the catalytic Proton donor.

The protein belongs to the histidine acid phosphatase family. As to quaternary structure, monomer. In terms of tissue distribution, detected in brain (at protein level).

It is found in the mitochondrion. It carries out the reaction a phosphate monoester + H2O = an alcohol + phosphate. It catalyses the reaction 1-(9Z-octadecenoyl)-sn-glycero-3-phosphate + H2O = 1-(9Z-octadecenoyl)-sn-glycerol + phosphate. In terms of biological role, hydrolyzes lysophosphatidic acid (LPA) containing a medium length fatty acid chain to the corresponding monoacylglycerol. Has highest activity with lysophosphatidic acid containing myristate (C14:0), monounsaturated oleate (C18:1) or palmitate (C16:0), and lower activity with C18:0 and C6:0 lysophosphatidic acid. The protein is Lysophosphatidic acid phosphatase type 6 (ACP6) of Bos taurus (Bovine).